A 330-amino-acid polypeptide reads, in one-letter code: DNA-directed RNA polymerase subunit alpha (330 aa).

Residues 1–229 (MKNLKFIKPF…DHFNVLVELS (229 aa)) are alpha N-terminal domain (alpha-NTD). Positions 245–330 (AHNYVLDLEI…HSVEEDKDKH (86 aa)) are alpha C-terminal domain (alpha-CTD).

It belongs to the RNA polymerase alpha chain family. As to quaternary structure, homodimer. The RNAP catalytic core consists of 2 alpha, 1 beta, 1 beta' and 1 omega subunit. When a sigma factor is associated with the core the holoenzyme is formed, which can initiate transcription.

The enzyme catalyses RNA(n) + a ribonucleoside 5'-triphosphate = RNA(n+1) + diphosphate. DNA-dependent RNA polymerase catalyzes the transcription of DNA into RNA using the four ribonucleoside triphosphates as substrates. In Aster yellows witches'-broom phytoplasma (strain AYWB), this protein is DNA-directed RNA polymerase subunit alpha.